The primary structure comprises 119 residues: Probable non-functional T cell receptor gamma variable 10 (119 aa).

The N-terminal stretch at 1–19 (MSLLEAFAFSSWALGLGLS) is a signal peptide. Positions 24–119 (FQLSISTEVK…MAVYYCAAWD (96 aa)) constitute an Ig-like domain. Cys40 and Cys115 form a disulfide bridge.

Gamma-delta TR is a heterodimer composed of a gamma and delta chain; disulfide-linked. The gamma-delta TR is associated with the transmembrane signaling CD3 coreceptor proteins following the stoichiometry: a single gamma-delta TR heterodimer associates with one CD3D-CD3E heterodimer, one CD3G-CD3E heterodimer and one CD247 homodimer forming a stable octameric structure. Upon activation, gamma-delta TR complex associates with FCER1G to initiate intracellular signaling.

Its subcellular location is the cell membrane. Functionally, probable non-functional open reading frame (ORF) of V region of the variable domain of T cell receptor (TR) gamma chain. Non-functional ORF generally cannot participate in the synthesis of a productive T cell receptor (TR) chain due to altered V-(D)-J or switch recombination and/or splicing site (at mRNA level) and/or conserved amino acid change (protein level). Gamma-delta TRs recognize a variety of self and foreign non-peptide antigens frequently expressed at the epithelial boundaries between the host and external environment, including endogenous lipids presented by MH-like protein CD1D and phosphoantigens presented by butyrophilin-like molecule BTN3A1. Upon antigen recognition induces rapid, innate-like immune responses involved in pathogen clearance and tissue repair. Binding of gamma-delta TR complex to antigen triggers phosphorylation of immunoreceptor tyrosine-based activation motifs (ITAMs) in the CD3 chains by the LCK and FYN kinases, allowing the recruitment, phosphorylation, and activation of ZAP70 that facilitates phosphorylation of the scaffolding proteins LCP2 and LAT. This lead to the formation of a supramolecular signalosome that recruits the phospholipase PLCG1, resulting in calcium mobilization and ERK activation, ultimately leading to T cell expansion and differentiation into effector cells. Gamma-delta TRs are produced through somatic rearrangement of a limited repertoire of variable (V), diversity (D), and joining (J) genes. The potential diversity of gamma-delta TRs is conferred by the unique ability to rearrange (D) genes in tandem and to utilize all three reading frames. The combinatorial diversity is considerably increased by the sequence exonuclease trimming and random nucleotide (N) region additions which occur during the V-(D)-J rearrangements. The polypeptide is Probable non-functional T cell receptor gamma variable 10 (Homo sapiens (Human)).